The chain runs to 398 residues: 1-deoxy-D-xylulose 5-phosphate reductoisomerase (398 aa).

NADPH contacts are provided by threonine 10, glycine 11, serine 12, isoleucine 13, asparagine 38, and asparagine 124. Lysine 125 is a binding site for 1-deoxy-D-xylulose 5-phosphate. Glutamate 126 lines the NADPH pocket. A Mn(2+)-binding site is contributed by aspartate 150. 1-deoxy-D-xylulose 5-phosphate is bound by residues serine 151, glutamate 152, serine 176, and histidine 199. Glutamate 152 provides a ligand contact to Mn(2+). Glycine 205 is an NADPH binding site. 4 residues coordinate 1-deoxy-D-xylulose 5-phosphate: serine 212, asparagine 217, lysine 218, and glutamate 221. Glutamate 221 is a binding site for Mn(2+).

The protein belongs to the DXR family. Mg(2+) is required as a cofactor. Mn(2+) serves as cofactor.

It catalyses the reaction 2-C-methyl-D-erythritol 4-phosphate + NADP(+) = 1-deoxy-D-xylulose 5-phosphate + NADPH + H(+). It functions in the pathway isoprenoid biosynthesis; isopentenyl diphosphate biosynthesis via DXP pathway; isopentenyl diphosphate from 1-deoxy-D-xylulose 5-phosphate: step 1/6. Functionally, catalyzes the NADPH-dependent rearrangement and reduction of 1-deoxy-D-xylulose-5-phosphate (DXP) to 2-C-methyl-D-erythritol 4-phosphate (MEP). In Crocosphaera subtropica (strain ATCC 51142 / BH68) (Cyanothece sp. (strain ATCC 51142)), this protein is 1-deoxy-D-xylulose 5-phosphate reductoisomerase.